The chain runs to 146 residues: Dihydroneopterin aldolase 1 (146 aa).

Residues Glu41, Tyr73, and 92-93 (LE) each bind substrate. Lys119 (proton donor/acceptor) is an active-site residue.

This sequence belongs to the DHNA family. Homooctamer. Forms a hollow cylinder assembled from two ring-shaped tetramers. In terms of tissue distribution, expressed in roots, leaves, stems and siliques.

It catalyses the reaction 7,8-dihydroneopterin = 6-hydroxymethyl-7,8-dihydropterin + glycolaldehyde. It participates in cofactor biosynthesis; tetrahydrofolate biosynthesis; 2-amino-4-hydroxy-6-hydroxymethyl-7,8-dihydropteridine diphosphate from 7,8-dihydroneopterin triphosphate: step 3/4. Its function is as follows. Catalyzes the conversion of 7,8-dihydroneopterin into 6-hydroxymethyl-7,8-dihydropterin, a biosynthetic precursor of the vitamin tetrahydrofolate. Can use L-threo-dihydroneopterin and D-erythro-dihydroneopterin as substrates for the formation of 6-hydroxymethyldihydropterin, but it can also catalyze the epimerization of carbon 2' of dihydroneopterin and dihydromonapterin. The polypeptide is Dihydroneopterin aldolase 1 (Arabidopsis thaliana (Mouse-ear cress)).